The chain runs to 1286 residues: DNA-directed RNA polymerase 147 kDa polypeptide (1286 aa).

Belongs to the poxviridae DNA-directed RNA polymerase 147 kDa subunit family. As to quaternary structure, the DNA-dependent RNA polymerase used for intermediate and late genes expression consists of eight subunits Rpo30/OPG66, Rpo7/OPG90, Rpo22/OPG103, Rpo147/OPG105, Rpo18/OPG119, Rpo19/OPG131, Rpo132/OPG151 and Rpo35/OPG156. The same holoenzyme, with the addition of the transcription-specificity factor OPG109, is used for early gene expression.

It is found in the virion. The enzyme catalyses RNA(n) + a ribonucleoside 5'-triphosphate = RNA(n+1) + diphosphate. Functionally, part of the DNA-dependent RNA polymerase which catalyzes the transcription of viral DNA into RNA using the four ribonucleoside triphosphates as substrates. Responsible for the transcription of early, intermediate and late genes. DNA-dependent RNA polymerase associates with the early transcription factor (ETF), itself composed of OPG118 and OPG133, thereby allowing the early genes transcription. Late transcription, and probably also intermediate transcription, require newly synthesized RNA polymerase. This Vaccinia virus (strain Ankara) (VACV) protein is DNA-directed RNA polymerase 147 kDa polypeptide (OPG105).